Consider the following 745-residue polypeptide: Receptor-type adenylate cyclase (745 aa).

Residues 1 to 341 (GELGQTDRFF…NEGALTRAQL (341 aa)) are Extracellular-facing. Asn15, Asn50, Asn189, and Asn312 each carry an N-linked (GlcNAc...) asparagine glycan. A helical transmembrane segment spans residues 342-362 (IGVVVGTIFAVLLLLALGIVL). The Cytoplasmic portion of the chain corresponds to 363 to 745 (CVALRNTRDN…GSDEVARTCV (383 aa)). Residues 384-538 (TLIFTDIESS…RTPNLAARTE (155 aa)) enclose the Guanylate cyclase domain. Mg(2+) is bound by residues Asp389 and Asp432.

Belongs to the adenylyl cyclase class-3 family. It depends on Mg(2+) as a cofactor.

Its subcellular location is the cell membrane. The enzyme catalyses ATP = 3',5'-cyclic AMP + diphosphate. Its function is as follows. Could act as a receptor for an unknown ligand. The chain is Receptor-type adenylate cyclase from Trypanosoma congolense.